A 481-amino-acid chain; its full sequence is Guanine nucleotide exchange factor C9orf72 (481 aa).

The uDENN C9ORF72-type domain maps to 23–194 (SPLLAATFAY…ELLSSMKSHS (172 aa)). The cDENN C9ORF72-type domain maps to 200–343 (DIADTVLNDD…SELTAFWRAT (144 aa)). Residues 370–464 (VLHRDTLVKA…IKPGLHSFIF (95 aa)) form the dDENN C9ORF72-type domain. A required for the homodimerization of the C9orf72-SMCR8 complex region spans residues 461-481 (SFIFGRPFYTSVQERDVLMTF).

As to quaternary structure, component of the C9orf72-SMCR8 complex, at least composed of C9orf72, SMCR8 and WDR41. The complex is formed of two protomers, each individually consisting of one molecule each of C9orf72, SMCR8 and WDR41. The protomers homodimerize via an interaction between C9orf72 (via C-terminus) and SMCR8 (via N-terminus). Within each protomer SMCR8 (via DENN domain) acts as a bridging protein between WDR41 (via C-terminus and N-terminus) and C9orf72 (via C-terminus). The C9orf72-SMCR8 complex associates with the ULK1/ATG1 kinase complex. Interacts with ULK1/ATG1 kinase complex members ULK1, ATG13 and RB1CC1. Interacts with SMCR8; the interaction is direct. Interacts with HNRNPA1, HNRNPA2B1 and UBQLN2. Interacts with small Rab GTPase RAB1A; the interaction mediates recruitment of RAB1A to the ULK1/ATG1 kinase complex. Also interacts with small Rab GTPase RAB7A. Interacts with cofilin. Interacts with GTP-binding proteins ARF1 and ARF6. Interacts with the DLG4/PSD-95. Interacts with CARM1 (via PH domain-like fold). Interacts with RAB39A and RAB39B (in GDP-bound forms); functions as GEF for RAB39A and RAB39B. In terms of tissue distribution, both isoforms are widely expressed, including kidney, lung, liver, heart, testis and several brain regions, such as cerebellum. Also expressed in the frontal cortex and in lymphoblasts (at protein level).

The protein resides in the cytoplasm. It is found in the nucleus. Its subcellular location is the P-body. It localises to the stress granule. The protein localises to the endosome. The protein resides in the lysosome. It is found in the cytoplasmic vesicle. Its subcellular location is the autophagosome. It localises to the autolysosome. The protein localises to the secreted. The protein resides in the cell projection. It is found in the axon. Its subcellular location is the growth cone. It localises to the perikaryon. The protein localises to the dendrite. The protein resides in the presynapse. It is found in the postsynapse. Its subcellular location is the nucleus membrane. Functionally, acts as a guanine-nucleotide releasing factor (GEF) for Rab GTPases by promoting the conversion of inactive RAB-GDP to the active form RAB-GTP. Acts as a GEF for RAB39A which enables HOPS-mediated autophagosome-lysosome membrane tethering and fusion in mammalian autophagy. Component of the C9orf72-SMCR8 complex where both subunits display GEF activity and that regulates autophagy. As part of the C9orf72-SMCR8-WDR41 (CSW) complex, functions as GEF for RAB8A and RAB39B, thereby promoting autophagosome maturation. As part of the C9orf72-SMCR8 complex, also functions as GTPase activating protein (GAP) for RAB8A and RAB11A in vitro. The C9orf72-SMCR8 complex also acts as a regulator of autophagy initiation by interacting with the ULK1/ATG1 kinase complex and modulating its protein kinase activity. Promotes initiation of autophagy by regulating the RAB1A-dependent trafficking of the ULK1/ATG1 kinase complex to the phagophore which leads to autophagosome formation. Acts as a regulator of mTORC1 signaling by promoting phosphorylation of mTORC1 substrates. Plays a role in endosomal trafficking. May be involved in regulating the maturation of phagosomes to lysosomes. Promotes the lysosomal localization and lysosome-mediated degradation of CARM1 which leads to inhibition of starvation-induced lipid metabolism. Regulates actin dynamics in motor neurons by inhibiting the GTP-binding activity of ARF6, leading to ARF6 inactivation. This reduces the activity of the LIMK1 and LIMK2 kinases which are responsible for phosphorylation and inactivation of cofilin, leading to CFL1/cofilin activation. Positively regulates axon extension and axon growth cone size in spinal motor neurons. Required for SMCR8 protein expression and localization at pre- and post-synaptic compartments in the forebrain, also regulates protein abundance of RAB3A and GRIA1/GLUR1 in post-synaptic compartments in the forebrain and hippocampus. Plays a role within the hematopoietic system in restricting inflammation and the development of autoimmunity. Its function is as follows. Regulates stress granule assembly in response to cellular stress. Does not play a role in regulation of stress granule assembly in response to cellular stress. This is Guanine nucleotide exchange factor C9orf72 from Homo sapiens (Human).